Reading from the N-terminus, the 382-residue chain is Dual-specificity RNA methyltransferase RlmN (382 aa).

The active-site Proton acceptor is E96. Residues 102 to 342 (QGKRGTLCVS…VRTTRGEDID (241 aa)) enclose the Radical SAM core domain. Residues C109 and C345 are joined by a disulfide bond. [4Fe-4S] cluster is bound by residues C116, C120, and C123. S-adenosyl-L-methionine is bound by residues 170–171 (GE), S202, 224–226 (SLH), and N302. C345 (S-methylcysteine intermediate) is an active-site residue.

Belongs to the radical SAM superfamily. RlmN family. [4Fe-4S] cluster is required as a cofactor.

It localises to the cytoplasm. The enzyme catalyses adenosine(2503) in 23S rRNA + 2 reduced [2Fe-2S]-[ferredoxin] + 2 S-adenosyl-L-methionine = 2-methyladenosine(2503) in 23S rRNA + 5'-deoxyadenosine + L-methionine + 2 oxidized [2Fe-2S]-[ferredoxin] + S-adenosyl-L-homocysteine. The catalysed reaction is adenosine(37) in tRNA + 2 reduced [2Fe-2S]-[ferredoxin] + 2 S-adenosyl-L-methionine = 2-methyladenosine(37) in tRNA + 5'-deoxyadenosine + L-methionine + 2 oxidized [2Fe-2S]-[ferredoxin] + S-adenosyl-L-homocysteine. Its function is as follows. Specifically methylates position 2 of adenine 2503 in 23S rRNA and position 2 of adenine 37 in tRNAs. m2A2503 modification seems to play a crucial role in the proofreading step occurring at the peptidyl transferase center and thus would serve to optimize ribosomal fidelity. This is Dual-specificity RNA methyltransferase RlmN from Pseudomonas fluorescens (strain SBW25).